Consider the following 141-residue polypeptide: uncharacterized protein (141 aa).

It is found in the mitochondrion. This is an uncharacterized protein from Arabidopsis thaliana (Mouse-ear cress).